Consider the following 293-residue polypeptide: uncharacterized protein (293 aa).

The active site involves D119.

The protein belongs to the pseudouridine synthase RluA family.

It carries out the reaction a uridine in RNA = a pseudouridine in RNA. This is an uncharacterized protein from Helicobacter pylori (strain J99 / ATCC 700824) (Campylobacter pylori J99).